A 319-amino-acid polypeptide reads, in one-letter code: Large ribosomal subunit protein eL8 (319 aa).

Residue Lys87 is modified to N6-acetyllysine. A Glycyl lysine isopeptide (Lys-Gly) (interchain with G-Cter in SUMO2) cross-link involves residue Lys101. N6-acetyllysine; alternate is present on Lys150. Lys150 participates in a covalent cross-link: Glycyl lysine isopeptide (Lys-Gly) (interchain with G-Cter in SUMO2); alternate. Lys178 participates in a covalent cross-link: Glycyl lysine isopeptide (Lys-Gly) (interchain with G-Cter in SUMO2). An N6-acetyllysine modification is found at Lys270. Lys298 participates in a covalent cross-link: Glycyl lysine isopeptide (Lys-Gly) (interchain with G-Cter in SUMO2).

Belongs to the eukaryotic ribosomal protein eL8 family. In terms of assembly, component of the large ribosomal subunit. Interacts with CRY1. Interacts with DICER1, AGO2, TARBP2, MOV10 and EIF6; they form a large RNA-induced silencing complex (RISC).

It is found in the cytoplasm. Functionally, component of the large ribosomal subunit. The ribosome is a large ribonucleoprotein complex responsible for the synthesis of proteins in the cell. In Oryctolagus cuniculus (Rabbit), this protein is Large ribosomal subunit protein eL8 (RPL7A).